Consider the following 496-residue polypeptide: Probable serine/threonine-protein kinase DDB_G0284251 (496 aa).

The segment covering methionine 1–glycine 13 has biased composition (low complexity). Residues methionine 1–serine 25 form a disordered region. One can recognise a Protein kinase domain in the interval tyrosine 36–phenylalanine 288. Residues isoleucine 42–valine 50 and lysine 65 each bind ATP. Residue aspartate 158 is the Proton acceptor of the active site. The tract at residues aspartate 323–asparagine 345 is disordered. A coiled-coil region spans residues glutamate 353–lysine 386. The disordered stretch occupies residues proline 454 to serine 496. Over residues proline 458 to lysine 486 the composition is skewed to low complexity. Positions serine 487–serine 496 are enriched in basic residues.

It belongs to the protein kinase superfamily. STE Ser/Thr protein kinase family. It depends on Mg(2+) as a cofactor.

It carries out the reaction L-seryl-[protein] + ATP = O-phospho-L-seryl-[protein] + ADP + H(+). The enzyme catalyses L-threonyl-[protein] + ATP = O-phospho-L-threonyl-[protein] + ADP + H(+). This is Probable serine/threonine-protein kinase DDB_G0284251 from Dictyostelium discoideum (Social amoeba).